The sequence spans 270 residues: Acyl-[acyl-carrier-protein]--UDP-N-acetylglucosamine O-acyltransferase (270 aa).

The protein belongs to the transferase hexapeptide repeat family. LpxA subfamily. As to quaternary structure, homotrimer.

The protein resides in the cytoplasm. The enzyme catalyses a (3R)-hydroxyacyl-[ACP] + UDP-N-acetyl-alpha-D-glucosamine = a UDP-3-O-[(3R)-3-hydroxyacyl]-N-acetyl-alpha-D-glucosamine + holo-[ACP]. The protein operates within glycolipid biosynthesis; lipid IV(A) biosynthesis; lipid IV(A) from (3R)-3-hydroxytetradecanoyl-[acyl-carrier-protein] and UDP-N-acetyl-alpha-D-glucosamine: step 1/6. Its function is as follows. Involved in the biosynthesis of lipid A, a phosphorylated glycolipid that anchors the lipopolysaccharide to the outer membrane of the cell. In Helicobacter pylori (strain G27), this protein is Acyl-[acyl-carrier-protein]--UDP-N-acetylglucosamine O-acyltransferase.